A 529-amino-acid polypeptide reads, in one-letter code: Bifunctional purine biosynthesis protein PurH (529 aa).

Positions 1 to 148 constitute an MGS-like domain; sequence MQQRRPVRRA…KNHKDVAIVV (148 aa). Residue K287 is modified to N6-acetyllysine.

Belongs to the PurH family.

It carries out the reaction (6R)-10-formyltetrahydrofolate + 5-amino-1-(5-phospho-beta-D-ribosyl)imidazole-4-carboxamide = 5-formamido-1-(5-phospho-D-ribosyl)imidazole-4-carboxamide + (6S)-5,6,7,8-tetrahydrofolate. The enzyme catalyses IMP + H2O = 5-formamido-1-(5-phospho-D-ribosyl)imidazole-4-carboxamide. The protein operates within purine metabolism; IMP biosynthesis via de novo pathway; 5-formamido-1-(5-phospho-D-ribosyl)imidazole-4-carboxamide from 5-amino-1-(5-phospho-D-ribosyl)imidazole-4-carboxamide (10-formyl THF route): step 1/1. Its pathway is purine metabolism; IMP biosynthesis via de novo pathway; IMP from 5-formamido-1-(5-phospho-D-ribosyl)imidazole-4-carboxamide: step 1/1. The chain is Bifunctional purine biosynthesis protein PurH from Escherichia coli (strain 55989 / EAEC).